Consider the following 314-residue polypeptide: Ferrochelatase (314 aa).

Residues H184 and E259 each coordinate Fe cation.

It belongs to the ferrochelatase family.

The protein localises to the cytoplasm. The enzyme catalyses heme b + 2 H(+) = protoporphyrin IX + Fe(2+). Its pathway is porphyrin-containing compound metabolism; protoheme biosynthesis; protoheme from protoporphyrin-IX: step 1/1. Its function is as follows. Catalyzes the ferrous insertion into protoporphyrin IX. In Chlamydia trachomatis serovar A (strain ATCC VR-571B / DSM 19440 / HAR-13), this protein is Ferrochelatase.